Reading from the N-terminus, the 305-residue chain is UDP-3-O-acyl-N-acetylglucosamine deacetylase (305 aa).

His78, His237, and Asp241 together coordinate Zn(2+). Residue His264 is the Proton donor of the active site.

The protein belongs to the LpxC family. It depends on Zn(2+) as a cofactor.

The catalysed reaction is a UDP-3-O-[(3R)-3-hydroxyacyl]-N-acetyl-alpha-D-glucosamine + H2O = a UDP-3-O-[(3R)-3-hydroxyacyl]-alpha-D-glucosamine + acetate. It participates in glycolipid biosynthesis; lipid IV(A) biosynthesis; lipid IV(A) from (3R)-3-hydroxytetradecanoyl-[acyl-carrier-protein] and UDP-N-acetyl-alpha-D-glucosamine: step 2/6. Catalyzes the hydrolysis of UDP-3-O-myristoyl-N-acetylglucosamine to form UDP-3-O-myristoylglucosamine and acetate, the committed step in lipid A biosynthesis. The chain is UDP-3-O-acyl-N-acetylglucosamine deacetylase from Burkholderia lata (strain ATCC 17760 / DSM 23089 / LMG 22485 / NCIMB 9086 / R18194 / 383).